A 195-amino-acid polypeptide reads, in one-letter code: MAFSVSSLMALVVISSSPVSSMSCDLPASLDLRKQETLRVLHQMETISPPSCLKHRTDFRFPQEQLDGRQFPEAQATSVLQEMLQQIVSLFHTERSSAAWNTTLLDRLLAGLHQQLEDLNTCLDEQTGEEESALGTVGPTLAVKRYFRRIRLYLTEKKYSDCAWEIVRVDIMRSFSSSANLQGRLGMKDGDLGSP.

The signal sequence occupies residues Met-1–Ser-23. Disulfide bonds link Cys-24–Cys-122 and Cys-52–Cys-162. A glycan (N-linked (GlcNAc...) asparagine) is linked at Asn-101.

It belongs to the alpha/beta interferon family.

Its subcellular location is the secreted. The polypeptide is Interferon omega-1 (Equus caballus (Horse)).